A 143-amino-acid chain; its full sequence is Peptide methionine sulfoxide reductase MsrB (143 aa).

The 123-residue stretch at 5–127 folds into the MsrB domain; that stretch reads NEELKKKLTP…NSAALRFIPK (123 aa). Catalysis depends on cysteine 116, which acts as the Nucleophile.

This sequence belongs to the MsrB Met sulfoxide reductase family.

The enzyme catalyses L-methionyl-[protein] + [thioredoxin]-disulfide + H2O = L-methionyl-(R)-S-oxide-[protein] + [thioredoxin]-dithiol. This Halalkalibacterium halodurans (strain ATCC BAA-125 / DSM 18197 / FERM 7344 / JCM 9153 / C-125) (Bacillus halodurans) protein is Peptide methionine sulfoxide reductase MsrB.